The primary structure comprises 483 residues: Regulatory protein ViaA (483 aa).

Belongs to the ViaA family. As to quaternary structure, homodimer. Interacts with RavA.

Its subcellular location is the cytoplasm. Functionally, component of the RavA-ViaA chaperone complex, which may act on the membrane to optimize the function of some of the respiratory chains. ViaA stimulates the ATPase activity of RavA. The protein is Regulatory protein ViaA of Shigella dysenteriae serotype 1 (strain Sd197).